The following is a 36-amino-acid chain: Photosystem II reaction center protein M (36 aa).

Blocked amino end (Met) is present on methionine 1. At 1–11 the chain is on the lumenal side; sequence MEVNQLGFIAT. The chain crosses the membrane as a helical span at residues 12-27; it reads ALFVLVPSVFLIILYV. The Cytoplasmic portion of the chain corresponds to 28–36; that stretch reads QTESQQKSS.

The protein belongs to the PsbM family. In terms of assembly, PSII is composed of 1 copy each of membrane proteins PsbA, PsbB, PsbC, PsbD, PsbE, PsbF, PsbH, PsbI, PsbJ, PsbK, PsbL, PsbM, PsbT, PsbX, PsbY, PsbZ, Psb30/Ycf12, peripheral proteins PsbO, CyanoQ (PsbQ), PsbU, PsbV, PsbU, PsbV and a large number of cofactors. It forms dimeric complexes. PSII binds multiple chlorophylls, carotenoids and specific lipids. serves as cofactor.

Its subcellular location is the cellular thylakoid membrane. Its function is as follows. One of the components of the core complex of photosystem II (PSII). PSII is a light-driven water:plastoquinone oxidoreductase that uses light energy to abstract electrons from H(2)O, generating O(2) and a proton gradient subsequently used for ATP formation. It consists of a core antenna complex that captures photons, and an electron transfer chain that converts photonic excitation into a charge separation. This subunit is found at the monomer-monomer interface. Probably involved in dimerization of PSII; at the monomer-monomer interface the only protein-protein contacts observed are between the 2 PsbM subunits. Lipids, chlorophylls and carotenoids contribute strongly to PSII dimerization. The sequence is that of Photosystem II reaction center protein M from Thermostichus vulcanus (Synechococcus vulcanus).